The following is a 367-amino-acid chain: Homoserine O-acetyltransferase (367 aa).

The AB hydrolase-1 domain occupies 44–350 (NAILVTHAWT…AYGHDAFLLE (307 aa)). The active-site Nucleophile is the Ser-150. Arg-217 lines the substrate pocket. Active-site residues include Asp-311 and His-344. Asp-345 is a binding site for substrate.

It belongs to the AB hydrolase superfamily. MetX family. In terms of assembly, homodimer.

It localises to the cytoplasm. The enzyme catalyses L-homoserine + acetyl-CoA = O-acetyl-L-homoserine + CoA. Its pathway is amino-acid biosynthesis; L-methionine biosynthesis via de novo pathway; O-acetyl-L-homoserine from L-homoserine: step 1/1. In terms of biological role, transfers an acetyl group from acetyl-CoA to L-homoserine, forming acetyl-L-homoserine. In Citrifermentans bemidjiense (strain ATCC BAA-1014 / DSM 16622 / JCM 12645 / Bem) (Geobacter bemidjiensis), this protein is Homoserine O-acetyltransferase.